Consider the following 338-residue polypeptide: Glycerol-3-phosphate dehydrogenase [NAD(P)+] (338 aa).

Residues Ser13, Trp14, and Lys108 each coordinate NADPH. Sn-glycerol 3-phosphate-binding residues include Lys108, Gly139, and Ser141. Ala143 lines the NADPH pocket. 5 residues coordinate sn-glycerol 3-phosphate: Lys194, Asp247, Ser257, Arg258, and Asn259. Lys194 (proton acceptor) is an active-site residue. Residue Arg258 participates in NADPH binding. NADPH is bound by residues Val282 and Glu284.

It belongs to the NAD-dependent glycerol-3-phosphate dehydrogenase family.

The protein localises to the cytoplasm. It catalyses the reaction sn-glycerol 3-phosphate + NAD(+) = dihydroxyacetone phosphate + NADH + H(+). The enzyme catalyses sn-glycerol 3-phosphate + NADP(+) = dihydroxyacetone phosphate + NADPH + H(+). It participates in membrane lipid metabolism; glycerophospholipid metabolism. Its function is as follows. Catalyzes the reduction of the glycolytic intermediate dihydroxyacetone phosphate (DHAP) to sn-glycerol 3-phosphate (G3P), the key precursor for phospholipid synthesis. The sequence is that of Glycerol-3-phosphate dehydrogenase [NAD(P)+] from Streptococcus pyogenes serotype M12 (strain MGAS9429).